Reading from the N-terminus, the 576-residue chain is Enolase 4 (576 aa).

The tract at residues 187–232 (ELRNEAMSEAPPQATPTSAPAKDKKGNDKGKKGNITENPLPPAEPP) is disordered. The span at 196–206 (APPQATPTSAP) shows a compositional bias: low complexity. Over residues 207–217 (AKDKKGNDKGK) the composition is skewed to basic and acidic residues. Positions 302 and 524 each coordinate substrate.

Belongs to the enolase family.

The catalysed reaction is (2R)-2-phosphoglycerate = phosphoenolpyruvate + H2O. The protein operates within carbohydrate degradation; glycolysis; pyruvate from D-glyceraldehyde 3-phosphate: step 4/5. This is Enolase 4 (eno4) from Danio rerio (Zebrafish).